Reading from the N-terminus, the 198-residue chain is Glycerol-3-phosphate acyltransferase 1 (198 aa).

The next 5 helical transmembrane spans lie at 5–25, 52–72, 81–101, 111–131, and 138–158; these read ALLA…AWLA, GPAL…VLLA, WAAL…FLAF, FGVI…LAIA, and FVSA…LVLP.

The protein belongs to the PlsY family. Probably interacts with PlsX.

The protein localises to the cell membrane. It catalyses the reaction an acyl phosphate + sn-glycerol 3-phosphate = a 1-acyl-sn-glycero-3-phosphate + phosphate. The protein operates within lipid metabolism; phospholipid metabolism. Catalyzes the transfer of an acyl group from acyl-phosphate (acyl-PO(4)) to glycerol-3-phosphate (G3P) to form lysophosphatidic acid (LPA). This enzyme utilizes acyl-phosphate as fatty acyl donor, but not acyl-CoA or acyl-ACP. This chain is Glycerol-3-phosphate acyltransferase 1, found in Deinococcus radiodurans (strain ATCC 13939 / DSM 20539 / JCM 16871 / CCUG 27074 / LMG 4051 / NBRC 15346 / NCIMB 9279 / VKM B-1422 / R1).